The chain runs to 110 residues: UPF0145 protein MTH_507 (110 aa).

It belongs to the UPF0145 family.

This is UPF0145 protein MTH_507 from Methanothermobacter thermautotrophicus (strain ATCC 29096 / DSM 1053 / JCM 10044 / NBRC 100330 / Delta H) (Methanobacterium thermoautotrophicum).